Consider the following 54-residue polypeptide: Large ribosomal subunit protein bL33 (54 aa).

This sequence belongs to the bacterial ribosomal protein bL33 family.

This chain is Large ribosomal subunit protein bL33, found in Caldicellulosiruptor saccharolyticus (strain ATCC 43494 / DSM 8903 / Tp8T 6331).